The following is a 346-amino-acid chain: Methylthioribose-1-phosphate isomerase (346 aa).

Residues 44–46, R87, and Q194 contribute to the substrate site; that span reads RGA. The active-site Proton donor is the D235. 245-246 is a substrate binding site; that stretch reads NK.

Belongs to the eIF-2B alpha/beta/delta subunits family. MtnA subfamily.

It catalyses the reaction 5-(methylsulfanyl)-alpha-D-ribose 1-phosphate = 5-(methylsulfanyl)-D-ribulose 1-phosphate. The protein operates within amino-acid biosynthesis; L-methionine biosynthesis via salvage pathway; L-methionine from S-methyl-5-thio-alpha-D-ribose 1-phosphate: step 1/6. Catalyzes the interconversion of methylthioribose-1-phosphate (MTR-1-P) into methylthioribulose-1-phosphate (MTRu-1-P). This Desulforamulus reducens (strain ATCC BAA-1160 / DSM 100696 / MI-1) (Desulfotomaculum reducens) protein is Methylthioribose-1-phosphate isomerase.